Here is a 582-residue protein sequence, read N- to C-terminus: Dihydroxy-acid dehydratase 3 (582 aa).

Cys-67 contributes to the [2Fe-2S] cluster binding site. Asp-99 is a binding site for Mg(2+). Cys-140 lines the [2Fe-2S] cluster pocket. Mg(2+) is bound by residues Asp-141 and Lys-142. Lys-142 is modified (N6-carboxylysine). Cys-212 is a [2Fe-2S] cluster binding site. Glu-462 serves as a coordination point for Mg(2+). Ser-488 acts as the Proton acceptor in catalysis.

Belongs to the IlvD/Edd family. In terms of assembly, homodimer. [2Fe-2S] cluster serves as cofactor. The cofactor is Mg(2+).

It carries out the reaction (2R)-2,3-dihydroxy-3-methylbutanoate = 3-methyl-2-oxobutanoate + H2O. It catalyses the reaction (2R,3R)-2,3-dihydroxy-3-methylpentanoate = (S)-3-methyl-2-oxopentanoate + H2O. The protein operates within amino-acid biosynthesis; L-isoleucine biosynthesis; L-isoleucine from 2-oxobutanoate: step 3/4. It participates in amino-acid biosynthesis; L-valine biosynthesis; L-valine from pyruvate: step 3/4. Functions in the biosynthesis of branched-chain amino acids. Catalyzes the dehydration of (2R,3R)-2,3-dihydroxy-3-methylpentanoate (2,3-dihydroxy-3-methylvalerate) into 2-oxo-3-methylpentanoate (2-oxo-3-methylvalerate) and of (2R)-2,3-dihydroxy-3-methylbutanoate (2,3-dihydroxyisovalerate) into 2-oxo-3-methylbutanoate (2-oxoisovalerate), the penultimate precursor to L-isoleucine and L-valine, respectively. This is Dihydroxy-acid dehydratase 3 from Bradyrhizobium diazoefficiens (strain JCM 10833 / BCRC 13528 / IAM 13628 / NBRC 14792 / USDA 110).